The chain runs to 453 residues: Ezy-1 protein (453 aa).

Residues 1–28 form the signal peptide; sequence MQLSNSLRSARSAAASSGCALASRPVVA. 3 disordered regions span residues 167–187, 272–307, and 412–453; these read SDGG…DADG, TGKA…SSGG, and SAGD…SPNM. Positions 279 to 300 are enriched in acidic residues; that stretch reads AEGDDGEGEEEGEAQDVGEDAV. Residues 415 to 425 are compositionally biased toward basic and acidic residues; the sequence is DGHEPEPKRPE.

The polypeptide is Ezy-1 protein (Ezy-1) (Chlamydomonas reinhardtii (Chlamydomonas smithii)).